We begin with the raw amino-acid sequence, 265 residues long: uncharacterized protein (265 aa).

2 disordered regions span residues 62–94 and 118–149; these read RNKK…ALGK and MVPG…RPNP. Residues 126-139 show a composition bias toward basic and acidic residues; that stretch reads DGPKKSDTDIKDAV.

This is an uncharacterized protein from Homo sapiens (Human).